Here is a 936-residue protein sequence, read N- to C-terminus: ABC transporter A family member 5 (936 aa).

A run of 7 helical transmembrane segments spans residues 34–54 (LIVIPFYLCVLLVGIQVLFDT), 340–360 (ASLIGPIFFTWVILLLFPVML), 393–413 (FLAISIVYIICLMIFGSAIGL), 422–442 (SIQFIFYFLCINLQISIAFLV), 454–474 (VAAYLYVFGSGLLGAFLFQFL), 484–501 (WIYIMELYPGFSLYRGLY), and 527–547 (AMEEIFYIIIVEWFVALIAAY). The ABC transporter domain maps to 614-851 (IVCDNLKKVY…YGGSYVLTMT (238 aa)). 652–659 (GPNGAGKT) is an ATP binding site.

It belongs to the ABC transporter superfamily. ABCA family. CPR flippase (TC 3.A.1.211) subfamily.

It is found in the membrane. The chain is ABC transporter A family member 5 (ABCA5) from Arabidopsis thaliana (Mouse-ear cress).